Here is a 106-residue protein sequence, read N- to C-terminus: Replication restart protein PriB (106 aa).

In terms of domain architecture, SSB spans 4–103; sequence TNRLVLSGTV…LHAEQIEFID (100 aa).

This sequence belongs to the PriB family. As to quaternary structure, homodimer. Interacts with PriA and DnaT. Component of the replication restart primosome. Primosome assembly occurs via a 'hand-off' mechanism. PriA binds to replication forks, subsequently PriB then DnaT bind; DnaT then displaces ssDNA to generate the helicase loading substrate.

Its function is as follows. Involved in the restart of stalled replication forks, which reloads the replicative helicase on sites other than the origin of replication; the PriA-PriB pathway is the major replication restart pathway. During primosome assembly it facilitates complex formation between PriA and DnaT on DNA; stabilizes PriA on DNA. Stimulates the DNA unwinding activity of PriA helicase. In Yersinia pestis, this protein is Replication restart protein PriB.